A 375-amino-acid polypeptide reads, in one-letter code: MVKGVIVLAAGGTGGHLFPAEALAHELKARGWDVHLATDARAQRFAGAFAEDHVHVIRSATIAGRNPIALLKTFWSLWQGNLDSRKLFRRLKPKLVAGFGGYPTLPPLYAASNMNIPTMVHEQNAVMGRANKGLAGRVKAIAGGFLPETGGVYAEKTVTTGNPVRPPVLAAAETSYKPVKADERFRLLVFGGSQGAQFFSTAIPAAVALLPDRDRARLLITQQARKEDEAAVREAYKKLGVPADVAPFFNDMPARMADAQFVISRSGASTVSEITVIGRPAMLVPFPHALDHDQAANAAALAAVGGGEVVRQSELSPERLAEILQAAMNEPQRLEAQAKAAKSVGKPDAARLLADLAEAIAAGKSVQEFKEGTRP.

UDP-N-acetyl-alpha-D-glucosamine contacts are provided by residues T13–G15, N124, R165, S193, and Q294.

It belongs to the glycosyltransferase 28 family. MurG subfamily.

The protein localises to the cell inner membrane. It carries out the reaction di-trans,octa-cis-undecaprenyl diphospho-N-acetyl-alpha-D-muramoyl-L-alanyl-D-glutamyl-meso-2,6-diaminopimeloyl-D-alanyl-D-alanine + UDP-N-acetyl-alpha-D-glucosamine = di-trans,octa-cis-undecaprenyl diphospho-[N-acetyl-alpha-D-glucosaminyl-(1-&gt;4)]-N-acetyl-alpha-D-muramoyl-L-alanyl-D-glutamyl-meso-2,6-diaminopimeloyl-D-alanyl-D-alanine + UDP + H(+). It functions in the pathway cell wall biogenesis; peptidoglycan biosynthesis. In terms of biological role, cell wall formation. Catalyzes the transfer of a GlcNAc subunit on undecaprenyl-pyrophosphoryl-MurNAc-pentapeptide (lipid intermediate I) to form undecaprenyl-pyrophosphoryl-MurNAc-(pentapeptide)GlcNAc (lipid intermediate II). The protein is UDP-N-acetylglucosamine--N-acetylmuramyl-(pentapeptide) pyrophosphoryl-undecaprenol N-acetylglucosamine transferase of Brucella anthropi (strain ATCC 49188 / DSM 6882 / CCUG 24695 / JCM 21032 / LMG 3331 / NBRC 15819 / NCTC 12168 / Alc 37) (Ochrobactrum anthropi).